Here is a 173-residue protein sequence, read N- to C-terminus: Crossover junction endodeoxyribonuclease RuvC (173 aa).

Active-site residues include Asp8, Glu67, and Asp139. Mg(2+)-binding residues include Asp8, Glu67, and Asp139.

This sequence belongs to the RuvC family. Homodimer which binds Holliday junction (HJ) DNA. The HJ becomes 2-fold symmetrical on binding to RuvC with unstacked arms; it has a different conformation from HJ DNA in complex with RuvA. In the full resolvosome a probable DNA-RuvA(4)-RuvB(12)-RuvC(2) complex forms which resolves the HJ. Requires Mg(2+) as cofactor.

Its subcellular location is the cytoplasm. It catalyses the reaction Endonucleolytic cleavage at a junction such as a reciprocal single-stranded crossover between two homologous DNA duplexes (Holliday junction).. Its function is as follows. The RuvA-RuvB-RuvC complex processes Holliday junction (HJ) DNA during genetic recombination and DNA repair. Endonuclease that resolves HJ intermediates. Cleaves cruciform DNA by making single-stranded nicks across the HJ at symmetrical positions within the homologous arms, yielding a 5'-phosphate and a 3'-hydroxyl group; requires a central core of homology in the junction. The consensus cleavage sequence is 5'-(A/T)TT(C/G)-3'. Cleavage occurs on the 3'-side of the TT dinucleotide at the point of strand exchange. HJ branch migration catalyzed by RuvA-RuvB allows RuvC to scan DNA until it finds its consensus sequence, where it cleaves and resolves the cruciform DNA. This is Crossover junction endodeoxyribonuclease RuvC from Shewanella woodyi (strain ATCC 51908 / MS32).